The sequence spans 185 residues: Protein GrpE (185 aa).

The segment at Met1 to Gln37 is disordered.

This sequence belongs to the GrpE family. As to quaternary structure, homodimer.

It localises to the cytoplasm. Its function is as follows. Participates actively in the response to hyperosmotic and heat shock by preventing the aggregation of stress-denatured proteins, in association with DnaK and GrpE. It is the nucleotide exchange factor for DnaK and may function as a thermosensor. Unfolded proteins bind initially to DnaJ; upon interaction with the DnaJ-bound protein, DnaK hydrolyzes its bound ATP, resulting in the formation of a stable complex. GrpE releases ADP from DnaK; ATP binding to DnaK triggers the release of the substrate protein, thus completing the reaction cycle. Several rounds of ATP-dependent interactions between DnaJ, DnaK and GrpE are required for fully efficient folding. The sequence is that of Protein GrpE from Bacillus pumilus (strain SAFR-032).